A 466-amino-acid polypeptide reads, in one-letter code: NADPH:adrenodoxin oxidoreductase, mitochondrial (466 aa).

Positions 40, 61, 69, and 105 each coordinate FAD. NADP(+) is bound by residues 176-179 (QGNV), 220-221 (RR), and Glu-232. FAD contacts are provided by residues Trp-379 and 386 to 388 (GVI). Residue Gly-386 coordinates NADP(+).

The protein belongs to the ferredoxin--NADP reductase type 1 family. The cofactor is FAD. Expressed predominantly in prothoracic gland of the larval ring gland and nurse cells of the adult ovary. Low expression is all adult tissues examined.

It is found in the mitochondrion inner membrane. The catalysed reaction is 2 reduced [adrenodoxin] + NADP(+) + H(+) = 2 oxidized [adrenodoxin] + NADPH. It functions in the pathway steroid metabolism; cholesterol metabolism. Its function is as follows. Required for synthesis of steroid hormones, for olfactory sensory behavior and completion of the second larval molt (a steroid mediated developmental transition) and pupariation. In Drosophila melanogaster (Fruit fly), this protein is NADPH:adrenodoxin oxidoreductase, mitochondrial (dare).